A 206-amino-acid polypeptide reads, in one-letter code: Large ribosomal subunit protein uL4 (206 aa).

Positions 43–52 are enriched in polar residues; sequence NKRQGTQSAK. The tract at residues 43 to 86 is disordered; it reads NKRQGTQSAKTRAEVSGGGRKPWRQKGTGHARQGSTRSPQWKGG.

It belongs to the universal ribosomal protein uL4 family. Part of the 50S ribosomal subunit.

Its function is as follows. One of the primary rRNA binding proteins, this protein initially binds near the 5'-end of the 23S rRNA. It is important during the early stages of 50S assembly. It makes multiple contacts with different domains of the 23S rRNA in the assembled 50S subunit and ribosome. Functionally, forms part of the polypeptide exit tunnel. The sequence is that of Large ribosomal subunit protein uL4 from Lachnoclostridium phytofermentans (strain ATCC 700394 / DSM 18823 / ISDg) (Clostridium phytofermentans).